The sequence spans 513 residues: GMP synthase [glutamine-hydrolyzing] (513 aa).

The 191-residue stretch at 5–195 (LVLVIDFGGQ…VYNICGCTGD (191 aa)) folds into the Glutamine amidotransferase type-1 domain. C82 serves as the catalytic Nucleophile. Active-site residues include H169 and E171. In terms of domain architecture, GMPS ATP-PPase spans 196–388 (WKMDSFVEKT…LGIPEKLVFR (193 aa)). An ATP-binding site is contributed by 223 to 229 (SGGVDSS).

Homodimer.

It carries out the reaction XMP + L-glutamine + ATP + H2O = GMP + L-glutamate + AMP + diphosphate + 2 H(+). It functions in the pathway purine metabolism; GMP biosynthesis; GMP from XMP (L-Gln route): step 1/1. In terms of biological role, catalyzes the synthesis of GMP from XMP. The protein is GMP synthase [glutamine-hydrolyzing] of Clostridium botulinum (strain Alaska E43 / Type E3).